The primary structure comprises 335 residues: Legumin type B (335 aa).

Disordered regions lie at residues 47-87 and 102-155; these read PETQ…GNSV and TEED…GRNG. Positions 105–118 are enriched in basic and acidic residues; the sequence is DTAKRLRSPRDKRN. The segment covering 135-144 has biased composition (acidic residues); it reads QQEEEEQEEE. A Cupin type-1 domain is found at 167-314; the sequence is ENIAQPARAD…AFGLRQRQVT (148 aa).

It belongs to the 11S seed storage protein (globulins) family. In terms of assembly, hexamer; each subunit is composed of an acidic and a basic chain derived from a single precursor and linked by a disulfide bond.

This protein found in the seeds of many leguminous and non-leguminous plants is the source of sulfur-containing amino acids in seed meals. The sequence is that of Legumin type B (LEB7) from Vicia faba (Broad bean).